A 224-amino-acid chain; its full sequence is Probable 2-phosphosulfolactate phosphatase (224 aa).

It belongs to the ComB family. The cofactor is Mg(2+).

It carries out the reaction (2R)-O-phospho-3-sulfolactate + H2O = (2R)-3-sulfolactate + phosphate. This Pseudothermotoga lettingae (strain ATCC BAA-301 / DSM 14385 / NBRC 107922 / TMO) (Thermotoga lettingae) protein is Probable 2-phosphosulfolactate phosphatase.